A 201-amino-acid polypeptide reads, in one-letter code: Large ribosomal subunit protein uL4 (201 aa).

The disordered stretch occupies residues 44–68 (RAQKSRAEVSGSGRKPWRQKGTGRA).

Belongs to the universal ribosomal protein uL4 family. In terms of assembly, part of the 50S ribosomal subunit.

In terms of biological role, one of the primary rRNA binding proteins, this protein initially binds near the 5'-end of the 23S rRNA. It is important during the early stages of 50S assembly. It makes multiple contacts with different domains of the 23S rRNA in the assembled 50S subunit and ribosome. Its function is as follows. Forms part of the polypeptide exit tunnel. This is Large ribosomal subunit protein uL4 from Buchnera aphidicola subsp. Acyrthosiphon pisum (strain 5A).